The chain runs to 133 residues: MAVILLGNEHIWKLPFCRLEFVAILEKMLSFAKLQTIEVYLVSDTTIAFFNLHYMNCLGITNVLSFPMDDEDLAGSIILSVDAVCRESLLYRQPILDYCLSLLSHGIAHIAGYTHGVEMDKFCSNLLLPFKLA.

3 residues coordinate Zn(2+): His105, His109, and His115.

This sequence belongs to the endoribonuclease YbeY family. Zn(2+) is required as a cofactor.

The protein localises to the cytoplasm. Single strand-specific metallo-endoribonuclease involved in late-stage 70S ribosome quality control and in maturation of the 3' terminus of the 16S rRNA. In Lawsonia intracellularis (strain PHE/MN1-00), this protein is Endoribonuclease YbeY.